Consider the following 667-residue polypeptide: Probable potassium transport system protein Kup (667 aa).

Transmembrane regions (helical) follow at residues 16 to 36, 58 to 78, 101 to 121, 146 to 166, 167 to 187, 221 to 241, 253 to 273, 294 to 314, 343 to 363, 373 to 393, 399 to 419, and 431 to 451; these read GFIIALGIVYGDIGTSPLYTM, VSLIIWTLTLITTIKYVLIAL, WLIIPAMLGGATLLSDGALTP, TNVILTTLLILMVLFGLQRFG, TGVIGKLFGPVMLVWFSVLGI, IFILGSIFLATTGAEALYSDL, WPFVKVCIILSYCGQAAWILA, VYLVILATLAAIIASQALISG, LYIPVINWSLFAVTSCTVLYF, YGLAITITMLMTTILLAYYLI, PLLASLLMAFFAFIEFIFFLA, and VVVLALAIVFVMVIWHAGTVI.

It belongs to the HAK/KUP transporter (TC 2.A.72) family.

The protein resides in the cell membrane. The catalysed reaction is K(+)(in) + H(+)(in) = K(+)(out) + H(+)(out). Functionally, transport of potassium into the cell. Likely operates as a K(+):H(+) symporter. This Streptococcus equi subsp. zooepidemicus (strain MGCS10565) protein is Probable potassium transport system protein Kup.